A 251-amino-acid polypeptide reads, in one-letter code: MKLVLIRHGESEWNRLNLFTGWTDVPLTPRGESEAQEGGRVLQEAGFDFDLCYTSFLKRAIRTLNFVLQALDREWLPVHKSWKLNERHYGDLQGLNKTETAQKYGEQQVRVWRRSFDVAPPPLTVGDARCPHTQASYRGVCASGRTPVLPFTESLKDTVARVVPYFEEEIKPQMISGQRVLIVAHGNSLRALMKHIESLDETQIMEVNLPTGVPLVYEFEADFTLCGKRFLGNEADVAARAQAVADQGKSN.

Residues 7 to 14, 20 to 21, Arg-59, 86 to 89, Lys-97, 113 to 114, and 186 to 187 contribute to the substrate site; these read RHGESEWN, TG, ERHY, RR, and GN. The Tele-phosphohistidine intermediate role is filled by His-8. Residue Glu-86 is the Proton donor/acceptor of the active site.

The protein belongs to the phosphoglycerate mutase family. BPG-dependent PGAM subfamily.

It catalyses the reaction (2R)-2-phosphoglycerate = (2R)-3-phosphoglycerate. It participates in carbohydrate degradation; glycolysis; pyruvate from D-glyceraldehyde 3-phosphate: step 3/5. Catalyzes the interconversion of 2-phosphoglycerate and 3-phosphoglycerate. This Treponema pallidum (strain Nichols) protein is 2,3-bisphosphoglycerate-dependent phosphoglycerate mutase.